The chain runs to 343 residues: Protein phosphatase 2C homolog 7, mitochondrial (343 aa).

The N-terminal 39 residues, 1-39, are a transit peptide targeting the mitochondrion; it reads MFANVGFRTLRVSRGPLYGSCSQIISFSKRTFYSSAKSG. The PPM-type phosphatase domain maps to 76-342; sequence IYQKLKDSIR…DDITVVVVRV (267 aa). Residues aspartate 109, glycine 110, and aspartate 265 each contribute to the Mn(2+) site.

Requires Mg(2+) as cofactor. Mn(2+) is required as a cofactor.

It is found in the mitochondrion. It carries out the reaction O-phospho-L-seryl-[protein] + H2O = L-seryl-[protein] + phosphate. The enzyme catalyses O-phospho-L-threonyl-[protein] + H2O = L-threonyl-[protein] + phosphate. In terms of biological role, protein phosphatase which positively regulates biosynthesis of the ubiquinone, coenzyme Q. Dephosphorylates and activates the ubiquinone biosynthesis protein CAT5/COQ7. Also dephosphorylates CIT1 on 'Ser-462', which leads to its activation. The protein is Protein phosphatase 2C homolog 7, mitochondrial (PTC7) of Saccharomyces cerevisiae (strain ATCC 204508 / S288c) (Baker's yeast).